The primary structure comprises 330 residues: MKYTFNEEKEFDIVAIGRACIDLNAAEYNRPMEETMTFSKYVGGSPANIAIGSAKLGLKAGFIGKIPDDQHGRFIVSYMQGKGVDTSQMTVDREGRKAGLAFTEILSPEECSILMYRDDVADLYLEPSEVNEGYIANAKMLLVSGTALAKSPSREAVLKAVHIAKKHDVKVVFELDYRPYTWQSAEETAVYYTLVAEQSDIVIGTRDEFDVMENRSGGGNDETVRHLFAHSADLVVIKHGVDGSYAYSRSGEVFRAHAYKTKVLKTFGAGDSYASAFIYGLVSGRDIETALKYGSASASIVVSKHSSSEAMPAAGEIIELIEAQHSLNGK.

It belongs to the carbohydrate kinase PfkB family.

The enzyme catalyses 5-dehydro-2-deoxy-D-gluconate + ATP = 6-phospho-5-dehydro-2-deoxy-D-gluconate + ADP + H(+). The protein operates within polyol metabolism; myo-inositol degradation into acetyl-CoA; acetyl-CoA from myo-inositol: step 5/7. Functionally, catalyzes the phosphorylation of 5-dehydro-2-deoxy-D-gluconate (2-deoxy-5-keto-D-gluconate or DKG) to 6-phospho-5-dehydro-2-deoxy-D-gluconate (DKGP). This is 5-dehydro-2-deoxygluconokinase from Bacillus velezensis (strain DSM 23117 / BGSC 10A6 / LMG 26770 / FZB42) (Bacillus amyloliquefaciens subsp. plantarum).